The sequence spans 513 residues: Histidine--tRNA ligase (513 aa).

The transit peptide at 1–24 directs the protein to the mitochondrion; the sequence is MADKAQLQEAIKTQGEVVRKLKSE. The region spanning 3 to 59 is the WHEP-TRS domain; it reads DKAQLQEAIKTQGEVVRKLKSEKASKEQIDEEVARLLQLKAQLGGDEGKHVFVLKTA. L-histidine-binding positions include 130 to 132, Arg-157, Gln-173, Asp-177, Arg-326, and 330 to 331; these read DLT and YY.

This sequence belongs to the class-II aminoacyl-tRNA synthetase family.

The protein localises to the cytoplasm. It is found in the mitochondrion. It catalyses the reaction tRNA(His) + L-histidine + ATP = L-histidyl-tRNA(His) + AMP + diphosphate + H(+). Catalyzes the aminoacylation of histidyl-tRNA. In Danio rerio (Zebrafish), this protein is Histidine--tRNA ligase.